Reading from the N-terminus, the 100-residue chain is Urease subunit gamma (100 aa).

The protein belongs to the urease gamma subunit family. As to quaternary structure, heterotrimer of UreA (gamma), UreB (beta) and UreC (alpha) subunits. Three heterotrimers associate to form the active enzyme.

It is found in the cytoplasm. The enzyme catalyses urea + 2 H2O + H(+) = hydrogencarbonate + 2 NH4(+). It functions in the pathway nitrogen metabolism; urea degradation; CO(2) and NH(3) from urea (urease route): step 1/1. This is Urease subunit gamma from Mycobacteroides abscessus (strain ATCC 19977 / DSM 44196 / CCUG 20993 / CIP 104536 / JCM 13569 / NCTC 13031 / TMC 1543 / L948) (Mycobacterium abscessus).